The chain runs to 599 residues: Beta-(1--&gt;2)glucan export ATP-binding/permease protein NdvA (599 aa).

One can recognise an ABC transmembrane type-1 domain in the interval 21 to 301 (TITMCVASVL…ISAFINQTVT (281 aa)). 5 consecutive transmembrane segments (helical) span residues 22–42 (ITMC…PVLF), 55–75 (IFSP…AAVF), 156–176 (MRMS…GQLV), 248–268 (MAST…VTKG), and 276–296 (IAFI…SAFI). Positions 335 to 569 (IVFDNVTYEF…GGRFSDLLRA (235 aa)) constitute an ABC transporter domain. 368–375 (GPTGAGKT) contacts ATP.

It belongs to the ABC transporter superfamily. Beta-(1--&gt;2)glucan exporter (TC 3.A.1.108.1) family. In terms of assembly, homodimer.

The protein resides in the cell inner membrane. The enzyme catalyses [(1-&gt;2)-beta-D-glucosyl](n)(in) + ATP + H2O = [(1-&gt;2)-beta-D-glucosyl](n)(out) + ADP + phosphate + H(+). Functionally, involved in beta-(1--&gt;2)glucan export. Transmembrane domains (TMD) form a pore in the inner membrane and the ATP-binding domain (NBD) is responsible for energy generation. This is Beta-(1--&gt;2)glucan export ATP-binding/permease protein NdvA from Brucella melitensis biotype 1 (strain ATCC 23456 / CCUG 17765 / NCTC 10094 / 16M).